Here is a 3038-residue protein sequence, read N- to C-terminus: Lovastatin nonaketide synthase, polyketide synthase component (3038 aa).

Residues 8–447 (NEPIVVVGSG…GTNAHAIIEE (440 aa)) enclose the Ketosynthase family 3 (KS3) domain. Catalysis depends on for beta-ketoacyl synthase activity residues Cys181, His320, and His367. The interval 562 to 889 (IFTGQGAQWP…GKNDLDTFSR (328 aa)) is malonyl-CoA:ACP transacylase (MAT) domain. Ser656 functions as the For malonyltransferase activity in the catalytic mechanism. Residues 695–757 (AMLAAGMSFE…DESTFARLLR (63 aa)) form a lovC-binding region. The N-terminal hotdog fold stretch occupies residues 953 to 1089 (HLLLGKLSEY…GQLALMIGDV (137 aa)). Positions 953 to 1263 (HLLLGKLSEY…ENITFKPFSP (311 aa)) are dehydratase (DH) domain. Residues 953–1267 (HLLLGKLSEY…FKPFSPPDAS (315 aa)) enclose the PKS/mFAS DH domain. His985 functions as the Proton acceptor; for dehydratase activity in the catalytic mechanism. Residues 1107–1267 (EEHPHMNRVN…FKPFSPPDAS (161 aa)) are C-terminal hotdog fold. The active-site Proton donor; for dehydratase activity is the Asp1174. Residues 1443 to 1543 (LEIGAGTGGA…ARSLLKPGGQ (101 aa)) form a methyltransferase (CMet) domain region. The segment at 2139 to 2437 (TLPTRVRSID…KIPEYRGAKA (299 aa)) is ketoreductase (KR) domain. The Carrier domain maps to 2463-2538 (QIVIDGLSAK…DLADEAAARL (76 aa)). Ser2498 carries the post-translational modification O-(pantetheine 4'-phosphoryl)serine. The disordered stretch occupies residues 2546 to 2602 (VAATDGGAESTDNTSENEVSGREDTDLSAAATITEPSSADEDDTEPGDEDVPRSHHP). Positions 2583–2594 (SADEDDTEPGDE) are enriched in acidic residues. The inactive Condensation domain stretch occupies residues 2602 to 2952 (PLSLGQEYSW…PTSNQPAPLL (351 aa)).

Homodimer. Each MAT domain from the lovB homodimer binds one lovC molecule to form the final active lovB-lovC megasynthase complex. Pantetheine 4'-phosphate serves as cofactor.

It carries out the reaction holo-[lovastatin nonaketide synthase] + 9 malonyl-CoA + S-adenosyl-L-methionine + 11 NADPH + 19 H(+) = dihydromonacolin L-[lovastatin nonaketide synthase] + S-adenosyl-L-homocysteine + 9 CO2 + 11 NADP(+) + 9 CoA + 6 H2O. Its pathway is polyketide biosynthesis; lovastatin biosynthesis. Lovastatin nonaketide synthase; part of the gene cluster that mediates the biosynthesis of lovastatin (also known as mevinolin, mevacor or monacolin K), a hypolipidemic inhibitor of (3S)-hydroxymethylglutaryl-coenzyme A (HMG-CoA) reductase (HMGR). The first step in the biosynthesis of lovastatin is the production of dihydromonacolin L acid by the lovastatin nonaketide synthase lovB and the trans-acting enoyl reductase lovC (called the lovB-lovC megasynthase complex) via condensation of one acetyl-CoA unit and 8 malonyl-CoA units. Dihydromonacolin L acid is released from lovB by the thioesterase lovG. Next, dihydromonacolin L acid is oxidized by the dihydromonacolin L monooxygenase lovA twice to form monacolin J acid. The 2-methylbutyrate moiety of lovastatin is synthesized by the lovastatin diketide synthase lovF via condensation of one acetyl-CoA unit and one malonyl-CoA unit. Finally, the covalent attachment of this moiety to monacolin J acid is catalyzed by the transesterase lovD to yield lovastatin. LovD has broad substrate specificity and can also convert monacolin J to simvastatin using alpha-dimethylbutanoyl-S-methyl-3-mercaptopropionate (DMB-S-MMP) as the thioester acyl donor, and can also catalyze the reverse reaction and function as hydrolase in vitro. LovD has much higher activity with LovF-bound 2-methylbutanoate than with free diketide substrates. The chain is Lovastatin nonaketide synthase, polyketide synthase component (lovB) from Aspergillus terreus (strain NIH 2624 / FGSC A1156).